A 320-amino-acid chain; its full sequence is Integrin-binding sialoprotein (320 aa).

The N-terminal stretch at 1-16 (MKTALILLCILGMASA) is a signal peptide. Residues S31, S68, S76, S77, and S96 each carry the phosphoserine modification. Disordered stretches follow at residues 60-117 (PVQG…VTAS), 136-225 (LPKK…RELT), and 238-264 (FQQT…VEYG). Over residues 67-106 (SSEENGDGDSSEEEGEEEETSNEEENNEDSEGNEDQEAEA) the composition is skewed to acidic residues. N-linked (GlcNAc...) asparagine glycosylation occurs at N108. Positions 139–152 (KAGDAEGKAPKMKE) are enriched in basic and acidic residues. The residue at position 153 (S153) is a Phosphoserine. Residues 153 to 176 (SDEEEEEEEEEENENEEAEVDENE) show a composition bias toward acidic residues. Polar residues-rich tracts occupy residues 177-188 (QVVNGTSTNSTE) and 249-261 (GTTS…SSTV). N180 and N185 each carry an N-linked (GlcNAc...) asparagine glycan. The Integrin-binding motif signature appears at 289 to 291 (RGD). Residues Y316 and Y317 each carry the sulfotyrosine modification.

Monomer. Interacts with integrins; the interaction promotes cell adhesion.

It localises to the secreted. Binds tightly to hydroxyapatite. Appears to form an integral part of the mineralized matrix. Probably important to cell-matrix interaction. Promotes adhesion and migration of various cells via the alpha-V/beta-3 integrin receptor (ITGAV:ITGB3). The protein is Integrin-binding sialoprotein (Ibsp) of Rattus norvegicus (Rat).